We begin with the raw amino-acid sequence, 145 residues long: 6-pyruvoyl tetrahydrobiopterin synthase (145 aa).

Phosphoserine; by PKG is present on S19. Zn(2+) is bound at residue H24. Residue S28 is modified to Phosphoserine. C43 (proton acceptor) is an active-site residue. Residues H49 and H51 each coordinate Zn(2+). Residue H90 is the Charge relay system of the active site. Y128 carries the post-translational modification Phosphotyrosine. The active-site Charge relay system is E134.

The protein belongs to the PTPS family. Homohexamer formed of two homotrimers in a head to head fashion. The cofactor is Zn(2+). In terms of processing, phosphorylation of Ser-19 is required for maximal enzyme activity.

The catalysed reaction is 7,8-dihydroneopterin 3'-triphosphate = 6-pyruvoyl-5,6,7,8-tetrahydropterin + triphosphate + H(+). It functions in the pathway cofactor biosynthesis; tetrahydrobiopterin biosynthesis; tetrahydrobiopterin from 7,8-dihydroneopterin triphosphate: step 1/3. In terms of biological role, involved in the biosynthesis of tetrahydrobiopterin, an essential cofactor of aromatic amino acid hydroxylases. Catalyzes the transformation of 7,8-dihydroneopterin triphosphate into 6-pyruvoyl tetrahydropterin. This Homo sapiens (Human) protein is 6-pyruvoyl tetrahydrobiopterin synthase (PTS).